Reading from the N-terminus, the 147-residue chain is Hemoglobin subunit beta-3 (147 aa).

In terms of domain architecture, Globin spans 3 to 147 (HWTAEEKAVI…LVDALSHSYH (145 aa)). Heme b contacts are provided by histidine 64 and histidine 93.

The protein belongs to the globin family. Heterotetramer of two alpha chains and two beta chains. Red blood cells.

This is a tadpole (larval) beta chain. In Aquarana catesbeiana (American bullfrog), this protein is Hemoglobin subunit beta-3.